A 421-amino-acid chain; its full sequence is Histidine--tRNA ligase (421 aa).

The protein belongs to the class-II aminoacyl-tRNA synthetase family. Homodimer.

It localises to the cytoplasm. The enzyme catalyses tRNA(His) + L-histidine + ATP = L-histidyl-tRNA(His) + AMP + diphosphate + H(+). In Alkaliphilus oremlandii (strain OhILAs) (Clostridium oremlandii (strain OhILAs)), this protein is Histidine--tRNA ligase.